The following is a 133-amino-acid chain: UPF0102 protein ABSDF1354 (133 aa).

It belongs to the UPF0102 family.

The chain is UPF0102 protein ABSDF1354 from Acinetobacter baumannii (strain SDF).